Here is a 214-residue protein sequence, read N- to C-terminus: Ras-related protein RABA2b (214 aa).

19–26 (GDSGVGKS) serves as a coordination point for GTP. An Effector region motif is present at residues 41–49 (SKSTIGVEF). GTP contacts are provided by residues 67–71 (DTAGQ), 125–128 (NKSD), and 155–156 (SA). Residues C211 and C212 are each lipidated (S-geranylgeranyl cysteine).

It belongs to the small GTPase superfamily. Rab family. In terms of tissue distribution, expressed in root tips.

It is found in the endosome membrane. Its subcellular location is the golgi apparatus. The protein localises to the trans-Golgi network membrane. Intracellular vesicle trafficking and protein transport. The chain is Ras-related protein RABA2b (RABA2B) from Arabidopsis thaliana (Mouse-ear cress).